An 829-amino-acid chain; its full sequence is Spindle-defective protein 2 (829 aa).

Disordered stretches follow at residues 1–29 (MNED…DGES), 41–104 (EDED…SNDI), 183–294 (KKDV…TTSD), and 326–471 (RKKR…NGHM). The segment covering 54–82 (FRLENRYKPSLHTPRELPTIREENREDVR) has biased composition (basic and acidic residues). Positions 83 to 93 (SNTSSRVNTRP) are enriched in polar residues. A compositionally biased stretch (basic and acidic residues) spans 183–216 (KKDVTRKQENVRPGKMMPEKVNDENEPKSRRFSP). Polar residues-rich tracts occupy residues 217 to 230 (ERNT…NSTK) and 266 to 294 (PQRT…TTSD). Positions 314-332 (VDINLLTALENARKKRDRP) form a coiled coil. Low complexity-rich tracts occupy residues 361–370 (SMTSIVSSST) and 384–408 (NSAT…RVST). Composition is skewed to polar residues over residues 409–439 (AKND…NSMT) and 448–463 (SVSS…STMT).

The protein resides in the cytoplasm. It localises to the cytoskeleton. Its subcellular location is the microtubule organizing center. It is found in the centrosome. The protein localises to the centriole. Functionally, required both for centrosome duplication and maturation. Required for pericentriolar material (PCM) recruitment. This is Spindle-defective protein 2 from Caenorhabditis briggsae.